The chain runs to 125 residues: UPF0389 protein CG9231 (125 aa).

Residues 69-88 form a helical membrane-spanning segment; the sequence is IRLANIMIALTAVGCAIMVY. Asn112 carries an N-linked (GlcNAc...) asparagine glycan.

The protein belongs to the UPF0389 family.

Its subcellular location is the membrane. This Drosophila melanogaster (Fruit fly) protein is UPF0389 protein CG9231.